The primary structure comprises 340 residues: Ketol-acid reductoisomerase (NADP(+)) (340 aa).

A KARI N-terminal Rossmann domain is found at 1–183 (MAITVYYDKD…GGGRTGIIET (183 aa)). Residues 26–29 (FGSQ), Ser-54, and 84–87 (DEFQ) contribute to the NADP(+) site. His-109 is an active-site residue. Residue Gly-135 participates in NADP(+) binding. One can recognise a KARI C-terminal knotted domain in the interval 184-329 (TFKAETETDL…EKLRGMMPWI (146 aa)). Mg(2+) contacts are provided by Asp-192, Glu-196, Glu-228, and Glu-232. Ser-253 serves as a coordination point for substrate.

This sequence belongs to the ketol-acid reductoisomerase family. Mg(2+) is required as a cofactor.

The enzyme catalyses (2R)-2,3-dihydroxy-3-methylbutanoate + NADP(+) = (2S)-2-acetolactate + NADPH + H(+). It carries out the reaction (2R,3R)-2,3-dihydroxy-3-methylpentanoate + NADP(+) = (S)-2-ethyl-2-hydroxy-3-oxobutanoate + NADPH + H(+). It functions in the pathway amino-acid biosynthesis; L-isoleucine biosynthesis; L-isoleucine from 2-oxobutanoate: step 2/4. It participates in amino-acid biosynthesis; L-valine biosynthesis; L-valine from pyruvate: step 2/4. Its function is as follows. Involved in the biosynthesis of branched-chain amino acids (BCAA). Catalyzes an alkyl-migration followed by a ketol-acid reduction of (S)-2-acetolactate (S2AL) to yield (R)-2,3-dihydroxy-isovalerate. In the isomerase reaction, S2AL is rearranged via a Mg-dependent methyl migration to produce 3-hydroxy-3-methyl-2-ketobutyrate (HMKB). In the reductase reaction, this 2-ketoacid undergoes a metal-dependent reduction by NADPH to yield (R)-2,3-dihydroxy-isovalerate. The polypeptide is Ketol-acid reductoisomerase (NADP(+)) (Campylobacter fetus subsp. fetus (strain 82-40)).